Reading from the N-terminus, the 65-residue chain is Large ribosomal subunit protein uL29 (65 aa).

Belongs to the universal ribosomal protein uL29 family.

This Brevibacillus brevis (strain 47 / JCM 6285 / NBRC 100599) protein is Large ribosomal subunit protein uL29.